The chain runs to 151 residues: Small ribosomal subunit protein uS15 (151 aa).

At lysine 27 the chain carries N6-acetyllysine; alternate. Lysine 27 bears the N6-succinyllysine; alternate mark. Residue lysine 27 forms a Glycyl lysine isopeptide (Lys-Gly) (interchain with G-Cter in ubiquitin) linkage. At serine 30 the chain carries Phosphoserine. Lysine 34 carries the post-translational modification N6-succinyllysine. Position 38 is a phosphotyrosine (tyrosine 38). Lysine 43 participates in a covalent cross-link: Glycyl lysine isopeptide (Lys-Gly) (interchain with G-Cter in SUMO2).

The protein belongs to the universal ribosomal protein uS15 family. In terms of assembly, component of the small ribosomal subunit. Part of the small subunit (SSU) processome, composed of more than 70 proteins and the RNA chaperone small nucleolar RNA (snoRNA) U3. Ubiquitinated at Lys-27 by RNF14 and RNF25 in response to ribosome collisions (ribosome stalling).

The protein localises to the cytoplasm. It is found in the nucleus. The protein resides in the nucleolus. Component of the small ribosomal subunit. The ribosome is a large ribonucleoprotein complex responsible for the synthesis of proteins in the cell. Part of the small subunit (SSU) processome, first precursor of the small eukaryotic ribosomal subunit. During the assembly of the SSU processome in the nucleolus, many ribosome biogenesis factors, an RNA chaperone and ribosomal proteins associate with the nascent pre-rRNA and work in concert to generate RNA folding, modifications, rearrangements and cleavage as well as targeted degradation of pre-ribosomal RNA by the RNA exosome. This Homo sapiens (Human) protein is Small ribosomal subunit protein uS15.